The primary structure comprises 197 residues: MRIAILGGTYNPIHIGHIFLAKEIEFLLNIDKVIFIPTCNPAHKLISEDVTVQNRIDMLKLALENENKILIDDCDIINGGITYTVDTISCVKKKYKNDKLFLVIGDDLFQNFDSWKDPQSIVSSVDLVVAHRIYKERLKSSFKHIYIDNKIIPISSSEIRNRIANGLPVSYLLPCSVLKYIKDNNLYVKKVNICERI.

Belongs to the NadD family.

It catalyses the reaction nicotinate beta-D-ribonucleotide + ATP + H(+) = deamido-NAD(+) + diphosphate. The protein operates within cofactor biosynthesis; NAD(+) biosynthesis; deamido-NAD(+) from nicotinate D-ribonucleotide: step 1/1. In terms of biological role, catalyzes the reversible adenylation of nicotinate mononucleotide (NaMN) to nicotinic acid adenine dinucleotide (NaAD). The chain is Probable nicotinate-nucleotide adenylyltransferase from Borrelia garinii subsp. bavariensis (strain ATCC BAA-2496 / DSM 23469 / PBi) (Borreliella bavariensis).